The chain runs to 89 residues: Cytochrome c oxidase subunit 7A, mitochondrial (89 aa).

A mitochondrion-targeting transit peptide spans 1 to 31 (MMNLSRAVVRSFATTAGRRSAAVPKDQIEKG). The Mitochondrial matrix segment spans residues 32–58 (YFEIRKVQEHFQKKDGKPVFLKGSVVD). Residues 59–81 (NVLYRVTVALALVGIGGMGKLFY) traverse the membrane as a helical segment. Topologically, residues 82–89 (ELSVPKKE) are mitochondrial intermembrane.

This sequence belongs to the cytochrome c oxidase VIIa family. As to quaternary structure, component of the cytochrome c oxidase (complex IV, CIV), a multisubunit enzyme composed of a catalytic core of 3 subunits and several supernumerary subunits. The complex exists as a monomer or a dimer and forms supercomplexes (SCs) in the inner mitochondrial membrane with ubiquinol-cytochrome c oxidoreductase (cytochrome b-c1 complex, complex III, CIII).

The protein resides in the mitochondrion inner membrane. It functions in the pathway energy metabolism; oxidative phosphorylation. Component of the cytochrome c oxidase, the last enzyme in the mitochondrial electron transport chain which drives oxidative phosphorylation. The respiratory chain contains 3 multisubunit complexes succinate dehydrogenase (complex II, CII), ubiquinol-cytochrome c oxidoreductase (cytochrome b-c1 complex, complex III, CIII) and cytochrome c oxidase (complex IV, CIV), that cooperate to transfer electrons derived from NADH and succinate to molecular oxygen, creating an electrochemical gradient over the inner membrane that drives transmembrane transport and the ATP synthase. Cytochrome c oxidase is the component of the respiratory chain that catalyzes the reduction of oxygen to water. Electrons originating from reduced cytochrome c in the intermembrane space (IMS) are transferred via the dinuclear copper A center (CU(A)) of subunit 2 and heme A of subunit 1 to the active site in subunit 1, a binuclear center (BNC) formed by heme A3 and copper B (CU(B)). The BNC reduces molecular oxygen to 2 water molecules using 4 electrons from cytochrome c in the IMS and 4 protons from the mitochondrial matrix. This Drosophila melanogaster (Fruit fly) protein is Cytochrome c oxidase subunit 7A, mitochondrial.